The chain runs to 361 residues: 3-dehydroquinate synthase (361 aa).

This sequence belongs to the archaeal-type DHQ synthase family.

It carries out the reaction 2-amino-2,3,7-trideoxy-D-lyxo-hept-6-ulosonate + NAD(+) + H2O = 3-dehydroquinate + NH4(+) + NADH + H(+). Its function is as follows. Catalyzes the oxidative deamination and cyclization of 2-amino-3,7-dideoxy-D-threo-hept-6-ulosonic acid (ADH) to yield 3-dehydroquinate (DHQ), which is fed into the canonical shikimic pathway of aromatic amino acid biosynthesis. This is 3-dehydroquinate synthase from Methanococcus maripaludis (strain C6 / ATCC BAA-1332).